Here is a 235-residue protein sequence, read N- to C-terminus: uncharacterized protein (235 aa).

This is an uncharacterized protein from Invertebrate iridescent virus 6 (IIV-6).